Here is a 341-residue protein sequence, read N- to C-terminus: Holliday junction branch migration complex subunit RuvB (341 aa).

A disordered region spans residues 1-22 (MSETAGKGVTMPEIMQSSYPDE). A large ATPase domain (RuvB-L) region spans residues 4 to 193 (TAGKGVTMPE…FGIISRLEFY (190 aa)). ATP-binding positions include Ile-32, Arg-33, Gly-74, Lys-77, Thr-78, Thr-79, 140-142 (EDY), Arg-183, Tyr-193, and Arg-230. Thr-78 is a binding site for Mg(2+). The interval 194 to 264 (TPEELSQIIL…LVNHALQKLD (71 aa)) is small ATPAse domain (RuvB-S). Residues 267–341 (EKGLDQMDRK…KAYKHLNLTD (75 aa)) are head domain (RuvB-H). DNA contacts are provided by Arg-322 and Arg-327.

Belongs to the RuvB family. In terms of assembly, homohexamer. Forms an RuvA(8)-RuvB(12)-Holliday junction (HJ) complex. HJ DNA is sandwiched between 2 RuvA tetramers; dsDNA enters through RuvA and exits via RuvB. An RuvB hexamer assembles on each DNA strand where it exits the tetramer. Each RuvB hexamer is contacted by two RuvA subunits (via domain III) on 2 adjacent RuvB subunits; this complex drives branch migration. In the full resolvosome a probable DNA-RuvA(4)-RuvB(12)-RuvC(2) complex forms which resolves the HJ.

The protein resides in the cytoplasm. It carries out the reaction ATP + H2O = ADP + phosphate + H(+). Its function is as follows. The RuvA-RuvB-RuvC complex processes Holliday junction (HJ) DNA during genetic recombination and DNA repair, while the RuvA-RuvB complex plays an important role in the rescue of blocked DNA replication forks via replication fork reversal (RFR). RuvA specifically binds to HJ cruciform DNA, conferring on it an open structure. The RuvB hexamer acts as an ATP-dependent pump, pulling dsDNA into and through the RuvAB complex. RuvB forms 2 homohexamers on either side of HJ DNA bound by 1 or 2 RuvA tetramers; 4 subunits per hexamer contact DNA at a time. Coordinated motions by a converter formed by DNA-disengaged RuvB subunits stimulates ATP hydrolysis and nucleotide exchange. Immobilization of the converter enables RuvB to convert the ATP-contained energy into a lever motion, pulling 2 nucleotides of DNA out of the RuvA tetramer per ATP hydrolyzed, thus driving DNA branch migration. The RuvB motors rotate together with the DNA substrate, which together with the progressing nucleotide cycle form the mechanistic basis for DNA recombination by continuous HJ branch migration. Branch migration allows RuvC to scan DNA until it finds its consensus sequence, where it cleaves and resolves cruciform DNA. The sequence is that of Holliday junction branch migration complex subunit RuvB from Lawsonia intracellularis (strain PHE/MN1-00).